An 83-amino-acid polypeptide reads, in one-letter code: Sec-independent protein translocase protein TatA (83 aa).

A helical transmembrane segment spans residues 1–21 (MGGLSLPHLIVLALVVLILFG). Positions 34–83 (KGIKSFKQGMNDEDSKPVTPPPAQIPPASLQQTPPPAQPAPQPTSTDQAQ) are disordered. The span at 66–75 (TPPPAQPAPQ) shows a compositional bias: pro residues.

Belongs to the TatA/E family. The Tat system comprises two distinct complexes: a TatABC complex, containing multiple copies of TatA, TatB and TatC subunits, and a separate TatA complex, containing only TatA subunits. Substrates initially bind to the TatABC complex, which probably triggers association of the separate TatA complex to form the active translocon.

Its subcellular location is the cell inner membrane. Its function is as follows. Part of the twin-arginine translocation (Tat) system that transports large folded proteins containing a characteristic twin-arginine motif in their signal peptide across membranes. TatA could form the protein-conducting channel of the Tat system. The chain is Sec-independent protein translocase protein TatA from Novosphingobium aromaticivorans (strain ATCC 700278 / DSM 12444 / CCUG 56034 / CIP 105152 / NBRC 16084 / F199).